The chain runs to 395 residues: Membrane glycoprotein spo14 (395 aa).

At 1–346 (MAELHLSFPA…KLEDAGVILR (346 aa)) the chain is on the cytoplasmic side. WD repeat units follow at residues 250-285 (MIRD…RFMS) and 290-326 (KLSQ…CLQF). The chain crosses the membrane as a helical; Signal-anchor for type II membrane protein span at residues 347–367 (LSLMFPFVLAILYFYLQLLFP). Over 368–395 (DEKLDAIHRFFSFILHIFSKYTIRNYDL) the chain is Lumenal.

The protein localises to the endoplasmic reticulum membrane. It is found in the golgi apparatus. Its subcellular location is the cis-Golgi network membrane. Functionally, required for the formation of transport vesicles from the ER. This function involves the cytoplasmic domain of the protein, which is thought to interact with the small GTP-binding protein sar1. The chain is Membrane glycoprotein spo14 (spo14) from Schizosaccharomyces pombe (strain 972 / ATCC 24843) (Fission yeast).